We begin with the raw amino-acid sequence, 320 residues long: ATP-dependent 6-phosphofructokinase (320 aa).

Gly11 is a binding site for ATP. Arg21–Arg25 contributes to the ADP binding site. ATP contacts are provided by residues Arg72–Cys73 and Gly102–Ser105. Mg(2+) is bound at residue Asp103. A substrate-binding site is contributed by Thr125–Asp127. The Proton acceptor role is filled by Asp127. Arg154 provides a ligand contact to ADP. Residues Arg162 and Met169–Arg171 contribute to the substrate site. ADP-binding positions include Gly185–Glu187 and Lys214–His216. Residues Glu223, Arg244, and His250–Arg253 each bind substrate.

This sequence belongs to the phosphofructokinase type A (PFKA) family. ATP-dependent PFK group I subfamily. Prokaryotic clade 'B1' sub-subfamily. In terms of assembly, homotetramer. It depends on Mg(2+) as a cofactor.

It localises to the cytoplasm. It carries out the reaction beta-D-fructose 6-phosphate + ATP = beta-D-fructose 1,6-bisphosphate + ADP + H(+). The protein operates within carbohydrate degradation; glycolysis; D-glyceraldehyde 3-phosphate and glycerone phosphate from D-glucose: step 3/4. Allosterically activated by ADP and other diphosphonucleosides, and allosterically inhibited by phosphoenolpyruvate. In terms of biological role, catalyzes the phosphorylation of D-fructose 6-phosphate to fructose 1,6-bisphosphate by ATP, the first committing step of glycolysis. The protein is ATP-dependent 6-phosphofructokinase of Clostridium botulinum (strain Alaska E43 / Type E3).